A 626-amino-acid polypeptide reads, in one-letter code: Chaperone protein DnaK (626 aa).

At T197 the chain carries Phosphothreonine; by autocatalysis. Residues 598 to 612 are compositionally biased toward low complexity; sequence AQGEQGQAAQPQAET. The interval 598–626 is disordered; the sequence is AQGEQGQAAQPQAETQGDDVQDVEFEEVK. Over residues 613–626 the composition is skewed to acidic residues; the sequence is QGDDVQDVEFEEVK.

This sequence belongs to the heat shock protein 70 family.

Acts as a chaperone. This Flavobacterium psychrophilum (strain ATCC 49511 / DSM 21280 / CIP 103535 / JIP02/86) protein is Chaperone protein DnaK.